Reading from the N-terminus, the 579-residue chain is Basic helix-loop-helix ARNT-like protein 2 (579 aa).

The segment at 1–198 is interaction with PER2; it reads MEFPRKRRGR…SPREKPIDTK (198 aa). Positions 4–9 match the Nuclear localization signal motif; it reads PRKRRG. The interval 40–61 is disordered; that stretch reads RTGVSAPSGIREAHSQMEKRRR. One can recognise a bHLH domain in the interval 48 to 101; sequence GIREAHSQMEKRRRDKMNHLIQKLSSMIPPHIPTAHKLDKLSVLRRAVQYLRSL. Basic and acidic residues predominate over residues 50–59; the sequence is REAHSQMEKR. The Nuclear export signal 1 signature appears at 118-128; that stretch reads IQDKELSHLIL. The 72-residue stretch at 119-190 folds into the PAS 1 domain; sequence QDKELSHLIL…KEQLSCDGSP (72 aa). A compositionally biased stretch (basic and acidic residues) spans 186–196; the sequence is CDGSPREKPID. The segment at 186 to 213 is disordered; the sequence is CDGSPREKPIDTKTSQVYSHPYTGRPRM. Residue K226 forms a Glycyl lysine isopeptide (Lys-Gly) (interchain with G-Cter in SUMO2 and SUMO3) linkage. A Glycyl lysine isopeptide (Lys-Gly) (interchain with G-Cter in SUMO2) cross-link involves residue K233. In terms of domain architecture, PAS 2 spans 296 to 366; it reads VPQKSGKINV…DKHKAVLQSK (71 aa). Positions 331–339 match the Nuclear export signal 2 motif; sequence LGYLPQELL. The PAC domain maps to 371–414; that stretch reads TDSYKFRVKDGAFVTLKSEWFSFTNPWTKELEYIVSVNTLVLGR. The disordered stretch occupies residues 469–536; the sequence is RLHSSSPEDA…AHPHGPLPGD (68 aa).

As to quaternary structure, component of the circadian core oscillator, which includes the CRY proteins, CLOCK, or NPAS2, BMAL1 or BMAL2, CSNK1D and/or CSNK1E, TIMELESS and the PER proteins. Interacts directly with CLOCK to form the BMAL2-CLOCK transactivator. Can form heterodimers or homodimers which interact directly with CLOCK to form the transcription activator. Interacts with NPAS2 and HIF1A. Interacts with PER2. Expressed in the suprachiasmatic nucleus (SCN).

It is found in the nucleus. Its function is as follows. Transcriptional activator which forms a core component of the circadian clock. The circadian clock, an internal time-keeping system, regulates various physiological processes through the generation of approximately 24 hour circadian rhythms in gene expression, which are translated into rhythms in metabolism and behavior. It is derived from the Latin roots 'circa' (about) and 'diem' (day) and acts as an important regulator of a wide array of physiological functions including metabolism, sleep, body temperature, blood pressure, endocrine, immune, cardiovascular, and renal function. Consists of two major components: the central clock, residing in the suprachiasmatic nucleus (SCN) of the brain, and the peripheral clocks that are present in nearly every tissue and organ system. Both the central and peripheral clocks can be reset by environmental cues, also known as Zeitgebers (German for 'timegivers'). The predominant Zeitgeber for the central clock is light, which is sensed by retina and signals directly to the SCN. The central clock entrains the peripheral clocks through neuronal and hormonal signals, body temperature and feeding-related cues, aligning all clocks with the external light/dark cycle. Circadian rhythms allow an organism to achieve temporal homeostasis with its environment at the molecular level by regulating gene expression to create a peak of protein expression once every 24 hours to control when a particular physiological process is most active with respect to the solar day. Transcription and translation of core clock components (CLOCK, NPAS2, BMAL1, BMAL2, PER1, PER2, PER3, CRY1 and CRY2) plays a critical role in rhythm generation, whereas delays imposed by post-translational modifications (PTMs) are important for determining the period (tau) of the rhythms (tau refers to the period of a rhythm and is the length, in time, of one complete cycle). A diurnal rhythm is synchronized with the day/night cycle, while the ultradian and infradian rhythms have a period shorter and longer than 24 hours, respectively. Disruptions in the circadian rhythms contribute to the pathology of cardiovascular diseases, cancer, metabolic syndromes and aging. A transcription/translation feedback loop (TTFL) forms the core of the molecular circadian clock mechanism. Transcription factors, CLOCK or NPAS2 and BMAL1 or BMAL2, form the positive limb of the feedback loop, act in the form of a heterodimer and activate the transcription of core clock genes and clock-controlled genes (involved in key metabolic processes), harboring E-box elements (5'-CACGTG-3') within their promoters. The core clock genes: PER1/2/3 and CRY1/2 which are transcriptional repressors form the negative limb of the feedback loop and interact with the CLOCK|NPAS2-BMAL1|BMAL2 heterodimer inhibiting its activity and thereby negatively regulating their own expression. This heterodimer also activates nuclear receptors NR1D1/2 and RORA/B/G, which form a second feedback loop and which activate and repress BMAL1 transcription, respectively. The CLOCK-BMAL2 heterodimer activates the transcription of SERPINE1/PAI1 and BHLHE40/DEC1. The sequence is that of Basic helix-loop-helix ARNT-like protein 2 (Bmal2) from Mus musculus (Mouse).